The primary structure comprises 195 residues: Small ribosomal subunit protein eS1 (195 aa).

This sequence belongs to the eukaryotic ribosomal protein eS1 family.

In Methanothermobacter thermautotrophicus (strain ATCC 29096 / DSM 1053 / JCM 10044 / NBRC 100330 / Delta H) (Methanobacterium thermoautotrophicum), this protein is Small ribosomal subunit protein eS1.